Reading from the N-terminus, the 192-residue chain is Dynein axonemal light chain 1 (192 aa).

4 LRR repeats span residues 49–70 (NCER…NGLK), 71–92 (NLKI…EAVG), 94–115 (TLEE…HVMK), and 116–137 (KLKV…LKLA). In terms of domain architecture, LRRCT spans 150–192 (NPLEEKYSADGNWIEEATKRLPKLKKLDGNPVIKQEEETEGES).

This sequence belongs to the dynein light chain LC1-type family. Interacts with DNAH5, a outer arm dynein heavy chain. Interacts with tubulin located within the A-tubule of the outer doublets in a ATP-independent manner.

The protein resides in the cytoplasm. Its subcellular location is the cytoskeleton. The protein localises to the cilium axoneme. Functionally, part of the multisubunit axonemal ATPase complexes that generate the force for cilia motility and govern beat frequency. Component of the outer arm dynein (ODA). May be involved in a mechanosensory feedback mechanism controlling ODA activity based on external conformational cues by tethering the outer arm dynein heavy chain (DNAH5) to the microtubule within the axoneme. This is Dynein axonemal light chain 1 (dnal1) from Danio rerio (Zebrafish).